The primary structure comprises 136 residues: Histone H3 (136 aa).

Positions 1 to 43 (MARTKQTARKSTGAKAPRKQLASKAARKSAPATGGIKKPHRFR) are disordered. 2 positions are modified to N6,N6,N6-trimethyllysine; alternate: Lys5 and Lys10. Lys5 carries the post-translational modification N6,N6-dimethyllysine; alternate. An N6-acetyllysine; alternate mark is found at Lys5 and Lys10. N6-methyllysine; alternate is present on Lys5. Ser11 carries the phosphoserine modification. N6-acetyllysine is present on residues Lys15, Lys19, and Lys24. 2 positions are modified to N6,N6,N6-trimethyllysine; alternate: Lys28 and Lys37. 2 positions are modified to N6,N6-dimethyllysine; alternate: Lys28 and Lys37. Lys28, Lys37, and Lys57 each carry N6-acetyllysine; alternate. Residues Lys28, Lys37, and Lys57 each carry the N6-methyllysine; alternate modification. Lys80 carries the N6-methyllysine modification.

The protein belongs to the histone H3 family. As to quaternary structure, the nucleosome is a histone octamer containing two molecules each of H2A, H2B, H3 and H4 assembled in one H3-H4 heterotetramer and two H2A-H2B heterodimers. The octamer wraps approximately 147 bp of DNA. In terms of processing, phosphorylated to form H3S10ph. H3S10ph promotes subsequent H3K14ac formation by GCN5. H3S10ph is only found in the mitotically dividing MIC, but not in the amitotically dividing MAC. H3S10ph is correlated with chromosome condensation during mitotic or meiotic micronuclear divisions. Acetylation of histone H3 leads to transcriptional activation. H3K14ac formation by GCN5 is promoted by H3S10ph. H3K9acK14ac is the preferred acetylated form of newly synthesized H3. Acetylation occurs almost exclusively in the MAC. Post-translationally, methylated to form H3K4me. H3K4me is only found in the transcriptionally active MAC. Methylated to form H3K9me in developing MACs during conjugation, when genome-wide DNA elimination occurs. At this stage, H3K9me specifically occurs on DNA sequences being eliminated (IES), probably targeted by small scan RNAs (scnRNAs) bound to IES, and is required for efficient IES elimination. H3K9me is required for the interaction with the chromodomains of PDD1 and PDD3. In terms of processing, the full-length protein H3S (slow migrating) is converted to H3F (fast migrating) by proteolytic removal of the first 6 residues. H3F is unique to MIC, and processing seems to occur regularly each generation at a specific point in the cell cycle.

It is found in the nucleus. Its subcellular location is the chromosome. In terms of biological role, core component of nucleosome. Nucleosomes wrap and compact DNA into chromatin, limiting DNA accessibility to the cellular machineries which require DNA as a template. Histones thereby play a central role in transcription regulation, DNA repair, DNA replication and chromosomal stability. DNA accessibility is regulated via a complex set of post-translational modifications of histones, also called histone code, and nucleosome remodeling. This Tetrahymena pyriformis protein is Histone H3.